A 943-amino-acid polypeptide reads, in one-letter code: Translation initiation factor IF-2 (943 aa).

The segment covering 99–113 (VKAAQTQAAPVQPEQ) has biased composition (low complexity). The disordered stretch occupies residues 99 to 354 (VKAAQTQAAP…LEPNQHAFQA (256 aa)). The span at 117 to 141 (DAVKARAEAAARAEARAKAEAEAAK) shows a compositional bias: basic and acidic residues. Low complexity predominate over residues 145–172 (AKAGNKAKPAAQKPTEAKAETAPVAAET). The segment covering 173-197 (KPAEPKEKAVKPKHERNGKGKDAKK) has biased composition (basic and acidic residues). Residues 200–215 (KPAAPAVPQPVVSAEE) show a composition bias toward low complexity. The span at 216-250 (QAQRDEEARRAAALRAHQEALLKEKQERQARREAM) shows a compositional bias: basic and acidic residues. A compositionally biased stretch (low complexity) spans 251–264 (KQQAEQQAKAAQEA). Basic and acidic residues-rich tracts occupy residues 295 to 308 (AKKEDRRNRDDEGQ) and 319 to 335 (GGRDRNNARNGGDERVR). Positions 443–612 (PRPPVVTVMG…LLEAEVLELT (170 aa)) constitute a tr-type G domain. Residues 452 to 459 (GHVDHGKT) form a G1 region. 452 to 459 (GHVDHGKT) lines the GTP pocket. The tract at residues 477–481 (GITQH) is G2. The G3 stretch occupies residues 498 to 501 (DTPG). GTP contacts are provided by residues 498–502 (DTPGH) and 552–555 (NKID). The G4 stretch occupies residues 552–555 (NKID). The interval 588-590 (SAK) is G5.

It belongs to the TRAFAC class translation factor GTPase superfamily. Classic translation factor GTPase family. IF-2 subfamily.

Its subcellular location is the cytoplasm. Its function is as follows. One of the essential components for the initiation of protein synthesis. Protects formylmethionyl-tRNA from spontaneous hydrolysis and promotes its binding to the 30S ribosomal subunits. Also involved in the hydrolysis of GTP during the formation of the 70S ribosomal complex. This Neisseria gonorrhoeae (strain ATCC 700825 / FA 1090) protein is Translation initiation factor IF-2.